A 742-amino-acid polypeptide reads, in one-letter code: 5-methyltetrahydropteroyltriglutamate--homocysteine methyltransferase (742 aa).

5-methyltetrahydropteroyltri-L-glutamate is bound by residues 18–21 and lysine 112; that span reads REWK. L-homocysteine-binding positions include 420–422 and glutamate 473; that span reads IGS. L-methionine-binding positions include 420–422 and glutamate 473; that span reads IGS. Position 550 (tryptophan 550) interacts with 5-methyltetrahydropteroyltri-L-glutamate. Aspartate 588 lines the L-homocysteine pocket. Aspartate 588 serves as a coordination point for L-methionine. 5-methyltetrahydropteroyltri-L-glutamate is bound at residue glutamate 594. Zn(2+) contacts are provided by histidine 630, cysteine 632, and glutamate 654. Residue histidine 683 is the Proton donor of the active site. Position 715 (cysteine 715) interacts with Zn(2+).

The protein belongs to the vitamin-B12 independent methionine synthase family. Zn(2+) is required as a cofactor.

It catalyses the reaction 5-methyltetrahydropteroyltri-L-glutamate + L-homocysteine = tetrahydropteroyltri-L-glutamate + L-methionine. The protein operates within amino-acid biosynthesis; L-methionine biosynthesis via de novo pathway; L-methionine from L-homocysteine (MetE route): step 1/1. Catalyzes the transfer of a methyl group from 5-methyltetrahydrofolate to homocysteine resulting in methionine formation. The polypeptide is 5-methyltetrahydropteroyltriglutamate--homocysteine methyltransferase (Staphylococcus aureus (strain MRSA252)).